The primary structure comprises 299 residues: Virginiamycin B lyase (299 aa).

A substrate-binding site is contributed by His-229. Glu-269 provides a ligand contact to Mg(2+). The active-site Proton acceptor is His-271. Position 286 (Glu-286) interacts with Mg(2+).

It belongs to the Vgb family. Monomer. Requires Mg(2+) as cofactor.

Its function is as follows. Inactivates the type B streptogramin antibiotics by linearizing the lactone ring at the ester linkage, generating a free phenylglycine carboxylate and converting the threonyl moiety into 2-amino-butenoic acid. The sequence is that of Virginiamycin B lyase from Bordetella bronchiseptica (strain ATCC BAA-588 / NCTC 13252 / RB50) (Alcaligenes bronchisepticus).